Reading from the N-terminus, the 253-residue chain is RNA polymerase sigma factor SigI6 (253 aa).

Residues 63 to 76 (EEYSVALLAFNEAI) carry the Polymerase core binding motif. Residues 203-222 (TLELLKLAKVSRRTIERNKK) constitute a DNA-binding region (H-T-H motif).

It belongs to the sigma-70 factor family. SigI subfamily. Interacts with RsgI6.

Its subcellular location is the cytoplasm. With respect to regulation, negatively regulated by the anti-sigma-I factor RsgI6. Binding of the polysaccharide substrate to RsgI6 may lead to the release and activation of SigI6. Functionally, sigma factors are initiation factors that promote the attachment of RNA polymerase to specific initiation sites and are then released. This sigma factor is involved in regulation of cellulosomal genes via an external polysaccharide-sensing mechanism. Recognizes the predicted promoters associated with sigI6 itself, xyn11B, xyn10D, xyn10Z, xyn10Y, cel9V, cseP, sigI1, cipA, and rsgI5. The chain is RNA polymerase sigma factor SigI6 from Acetivibrio thermocellus (strain ATCC 27405 / DSM 1237 / JCM 9322 / NBRC 103400 / NCIMB 10682 / NRRL B-4536 / VPI 7372) (Clostridium thermocellum).